A 140-amino-acid chain; its full sequence is Putative nickel-responsive regulator (140 aa).

4 residues coordinate Ni(2+): H81, H92, H94, and C100.

The protein belongs to the transcriptional regulatory CopG/NikR family. It depends on Ni(2+) as a cofactor.

Its function is as follows. Transcriptional regulator. In Methanothrix thermoacetophila (strain DSM 6194 / JCM 14653 / NBRC 101360 / PT) (Methanosaeta thermophila), this protein is Putative nickel-responsive regulator.